We begin with the raw amino-acid sequence, 253 residues long: HTH-type transcriptional regulator YdeO (253 aa).

One can recognise an HTH araC/xylS-type domain in the interval 137–233; that stretch reads GKVRNIVNMK…GNSPKRVSKE (97 aa). 2 DNA-binding regions (H-T-H motif) span residues 154-175 and 200-223; these read KDICDCLYISESLLKKKLKQEQ and VNKIAEQCGYASTSYFIYAFRKHF.

Induces the expression of gadE and mdtEF. Could also regulate the expression of other genes involved in acid resistance. In Escherichia coli O157:H7, this protein is HTH-type transcriptional regulator YdeO.